Here is a 194-residue protein sequence, read N- to C-terminus: Potassium-transporting ATPase KdpC subunit (194 aa).

The helical transmembrane segment at 12 to 34 (LFLLLLTGGVYPLLTTALGQWWF) threads the bilayer.

This sequence belongs to the KdpC family. The system is composed of three essential subunits: KdpA, KdpB and KdpC.

It localises to the cell inner membrane. Its function is as follows. Part of the high-affinity ATP-driven potassium transport (or Kdp) system, which catalyzes the hydrolysis of ATP coupled with the electrogenic transport of potassium into the cytoplasm. This subunit acts as a catalytic chaperone that increases the ATP-binding affinity of the ATP-hydrolyzing subunit KdpB by the formation of a transient KdpB/KdpC/ATP ternary complex. The sequence is that of Potassium-transporting ATPase KdpC subunit from Salmonella heidelberg (strain SL476).